The primary structure comprises 249 residues: Tetraspanin-18 (249 aa).

Over 1 to 13 (MEGDCLSCMKYLM) the chain is Cytoplasmic. Residues 14 to 34 (FVFNFFIFLGGACLLGIGIWV) traverse the membrane as a helical segment. Topologically, residues 35–49 (MVDPTGFREIVAANP) are extracellular. Residues 50–70 (LLITGAYILLAMGGLLFLLGF) traverse the membrane as a helical segment. Residues 71 to 83 (LGCCGAVRENKCL) are Cytoplasmic-facing. The chain crosses the membrane as a helical span at residues 84–104 (LLFFFLFILIIFLAELSAAIL). At 105-223 (AFIFRGNLTR…AFETYVYLAG (119 aa)) the chain is on the extracellular side. Residues Asn-111 and Asn-129 are each glycosylated (N-linked (GlcNAc...) asparagine). The chain crosses the membrane as a helical span at residues 224–244 (ALAIGVLAIELFAMIFAMCLF). The Cytoplasmic segment spans residues 245-249 (RGIIQ).

The protein belongs to the tetraspanin (TM4SF) family. As to quaternary structure, interacts with ORAI1; this interaction regulates ORAI1 exit from the endoplasmic (ER), and/or Golgi, and trafficking to the cell surface.

It localises to the membrane. Plays a role in the cell surface localization of ORAI1 and may participate in the regulation of Ca(2+) signaling and the VWF release in response to inflammatory stimuli. The protein is Tetraspanin-18 of Bos taurus (Bovine).